Here is a 146-residue protein sequence, read N- to C-terminus: Snaclec anticoagulant protein subunit B (146 aa).

The N-terminal stretch at 1-23 is a signal peptide; the sequence is MGRFIFVSFGLLVLFLSLSGTAA. A C-type lectin domain is found at 24 to 146; it reads DCPSDWSSYE…IANFVCEFQA (123 aa). 3 disulfide bridges follow: Cys-25–Cys-36, Cys-53–Cys-142, and Cys-119–Cys-134. 3 residues coordinate Ca(2+): Ser-64, Gln-66, and Glu-70. Glu-143 is a Ca(2+) binding site.

The protein belongs to the snaclec family. Heterodimer with subunit A of agkisacutacin or AaACP; disulfide-linked. As to expression, expressed by the venom gland.

The protein resides in the secreted. In terms of biological role, anticoagulant protein which binds to the gamma-carboxyglutamic acid-domain regions of factors IX and factor X in the presence of calcium with a 1 to 1 stoichiometry. Also inhibits platelet aggregation by binding to platelet glycoprotein Ibalpha (GP1BA) and functioning as a blocker of vWF. Is devoid of hemorrhagic and lethal activities. Possesses antithrombotic and thrombolytic activities. Also hydrolyzes the Aalpha-chain of fibrinogen. Does not affect the Bbeta-chain and the gamma chain. The chain is Snaclec anticoagulant protein subunit B from Deinagkistrodon acutus (Hundred-pace snake).